The following is a 228-amino-acid chain: MQFITVALTLIALASASPIATNVEKPSELEARQLNSVRNDLISGNAAACPSVILIFARASGEVGNMGLSAGTNVASALEREFRNDIWVQGVGDPYDAALSPNFLPAGTTQGAIDEAKRMFTLANTKCPNAAVVAGGYSQGTAVMFNAVSEMPAAVQDQIKGVVLFGYTKNLQNRGRIPDFPTEKTEVYCNASDAVCFGTLFLLPAHFLYTTESSIAAPNWLIRQIRAA.

An N-terminal signal peptide occupies residues M1–A16. A disulfide bridge connects residues C49 and C127. The Nucleophile role is filled by S138. Cysteines 189 and 196 form a disulfide. N-linked (GlcNAc...) asparagine glycosylation occurs at N190. The active site involves D193. The active-site Proton donor/acceptor is H206.

It belongs to the cutinase family. Post-translationally, the 2 disulfide bonds play a critical role in holding the catalytic residues in juxta-position; reduction of the disulfide bridges results in the complete inactivation of the enzyme.

The protein localises to the secreted. The enzyme catalyses cutin + H2O = cutin monomers.. Functionally, catalyzes the hydrolysis of complex carboxylic polyesters found in the cell wall of plants. Degrades cutin, a macromolecule that forms the structure of the plant cuticle. Required for efficient penetration of the host plant cuticle by the appressorium during the initial stage of fungal infection. The sequence is that of Cutinase CUT1 from Pyricularia oryzae (strain 70-15 / ATCC MYA-4617 / FGSC 8958) (Rice blast fungus).